The primary structure comprises 173 residues: Transmembrane protein 278 (173 aa).

Over residues 1 to 14 the composition is skewed to acidic residues; sequence MSEQERETEEDEGV. A disordered region spans residues 1 to 25; that stretch reads MSEQERETEEDEGVASDTAPMLPRR. The next 3 membrane-spanning stretches (helical) occupy residues 31–51, 53–73, and 107–127; these read HISVLAPILATRGLGTLVLSG, ALVGFLLHLLLPGTVFLLVLL, and AALIVFGLLSLPPLVVLAAAA. The segment at 141-165 is disordered; sequence DPARTPAPRRPPRSSGDLADGHPDE.

It belongs to the TMEM88 family.

The protein localises to the membrane. In Mus musculus (Mouse), this protein is Transmembrane protein 278 (Tmem278).